A 389-amino-acid polypeptide reads, in one-letter code: Pre-mRNA-splicing factor PRP46 (389 aa).

7 WD repeats span residues 83–123 (AHQG…LKAV), 126–165 (GHVL…SDAG), 173–212 (GHLG…EAMT), 215–254 (GHTN…TELL), 257–298 (NHSK…NEFG), 308–347 (DNSR…LQQS), and 356–389 (PEQS…GTSY).

The protein belongs to the WD repeat PRL1/PRL2 family. Associated with the spliceosome.

The protein resides in the cytoplasm. It localises to the nucleus. Its function is as follows. Involved in pre-mRNA splicing and required for cell cycle progression at G2/M. This chain is Pre-mRNA-splicing factor PRP46 (PRP46), found in Candida albicans (strain SC5314 / ATCC MYA-2876) (Yeast).